The sequence spans 308 residues: Reaction center protein M chain (308 aa).

Helical transmembrane passes span 54–80 (GSLG…YQAG), 111–140 (KEGG…RAQA), and 143–168 (MGKH…RPIL). Positions 183 and 203 each coordinate (7R,8Z)-bacteriochlorophyll b. A helical transmembrane segment spans residues 198–226 (FYNPFHGLSIAFLYGSALLFAMHGATILA). Fe cation contacts are provided by histidine 220 and glutamate 235. Tryptophan 253 lines the a ubiquinone pocket. A helical transmembrane segment spans residues 260–286 (NATMEGIHRWAIWMAVLVTLTGGIGIL). Histidine 267 lines the Fe cation pocket.

The protein belongs to the reaction center PufL/M/PsbA/D family. Reaction center is composed of four bacteriochlorophylls, two bacteriopheophytins, two ubiquinones, one iron, and three highly hydrophobic polypeptide chains (designated L, M, and H).

The protein localises to the cellular chromatophore membrane. The reaction center is a membrane-bound complex that mediates the initial photochemical event in the electron transfer process of photosynthesis. The sequence is that of Reaction center protein M chain (pufM) from Cereibacter sphaeroides (strain ATCC 17023 / DSM 158 / JCM 6121 / CCUG 31486 / LMG 2827 / NBRC 12203 / NCIMB 8253 / ATH 2.4.1.) (Rhodobacter sphaeroides).